Consider the following 1330-residue polypeptide: DNA-directed RNA polymerase subunit beta'' (1330 aa).

Residues cysteine 214, cysteine 282, cysteine 289, and cysteine 292 each contribute to the Zn(2+) site.

It belongs to the RNA polymerase beta' chain family. RpoC2 subfamily. As to quaternary structure, in plastids the minimal PEP RNA polymerase catalytic core is composed of four subunits: alpha, beta, beta', and beta''. When a (nuclear-encoded) sigma factor is associated with the core the holoenzyme is formed, which can initiate transcription. It depends on Zn(2+) as a cofactor.

It is found in the plastid. It localises to the chloroplast. It catalyses the reaction RNA(n) + a ribonucleoside 5'-triphosphate = RNA(n+1) + diphosphate. In terms of biological role, DNA-dependent RNA polymerase catalyzes the transcription of DNA into RNA using the four ribonucleoside triphosphates as substrates. The polypeptide is DNA-directed RNA polymerase subunit beta'' (Physcomitrium patens (Spreading-leaved earth moss)).